The chain runs to 80 residues: Delta-actitoxin-Amc2a (80 aa).

Residues 1–19 (MNKVLFLCLVVLCATSAFA) form the signal peptide. The propeptide occupies 20-30 (AEEEYVERAPV). Disulfide bonds link C37-C73, C39-C65, and C55-C74. P56 is modified (hydroxyproline).

It belongs to the sea anemone type 3 (BDS) potassium channel toxin family.

It is found in the secreted. The protein localises to the nematocyst. In terms of biological role, neurotoxon that induces paralysis when injected into crabs. The polypeptide is Delta-actitoxin-Amc2a (Antheopsis maculata (Sea anemone)).